The sequence spans 455 residues: Chromosomal replication initiator protein DnaA (455 aa).

Residues 1-75 (MDTNNNIEKE…EILSQNKVGM (75 aa)) are domain I, interacts with DnaA modulators. The segment at 75–106 (MHLAHSVDVRIEVAPKIQISTQSNINYKATKM) is domain II. The interval 107–321 (SVKDSYTFEN…GAIIKISVNA (215 aa)) is domain III, AAA+ region. ATP-binding residues include Gly-151, Gly-153, Lys-154, and Thr-155. The domain IV, binds dsDNA stretch occupies residues 322–455 (NLMNASIDLN…DKKTAFNSSE (134 aa)).

The protein belongs to the DnaA family. As to quaternary structure, oligomerizes as a right-handed, spiral filament on DNA at oriC.

The protein localises to the cytoplasm. Plays an essential role in the initiation and regulation of chromosomal replication. ATP-DnaA binds to the origin of replication (oriC) to initiate formation of the DNA replication initiation complex once per cell cycle. Binds the DnaA box (a 9 base pair repeat at the origin) and separates the double-stranded (ds)DNA. Forms a right-handed helical filament on oriC DNA; dsDNA binds to the exterior of the filament while single-stranded (ss)DNA is stabiized in the filament's interior. The ATP-DnaA-oriC complex binds and stabilizes one strand of the AT-rich DNA unwinding element (DUE), permitting loading of DNA polymerase. After initiation quickly degrades to an ADP-DnaA complex that is not apt for DNA replication. Binds acidic phospholipids. The polypeptide is Chromosomal replication initiator protein DnaA (Helicobacter pylori (strain HPAG1)).